The sequence spans 106 residues: Ribosomal processing cysteine protease Prp (106 aa).

His-22 acts as the Proton donor in catalysis. The active-site Nucleophile is Cys-34.

It belongs to the Prp family. In terms of assembly, homodimer. A mutant protein unable to cleave bL27 copurifies with its substrate.

Not inhibited by short peptide analogs; a 6-mer inhibits only 20% while a 13-mer inhibits 63%. Inhibited by Ac-KLNLQFF-CH(2) which binds covalantly to Cys-34. Inhibited by mersalyl acid (C13H18HgNO6). An essential cysteine protease that cleaves the N-terminal 9 amino acids from ribosomal protein bL27. Also acts as an N-terminal protease on the major capsid and scaffold assembly proteins of bacteriophage 80alpha. Cleavage of the N-terminus of bL27 (and thus this enzyme) is essential for growth; it cannot be replaced by a 'pre-cleaved' or non-cleavable form of bL27. Might serve a chaperone function during ribosome assembly. This Staphylococcus aureus (strain NCTC 8325 / PS 47) protein is Ribosomal processing cysteine protease Prp.